A 429-amino-acid chain; its full sequence is Ubiquinone hydroxylase UbiL (429 aa).

The disordered stretch occupies residues 1 to 22 (MSEPLLRGLAAGDPPSATGPVT).

This sequence belongs to the UbiH/COQ6 family. FAD serves as cofactor.

The catalysed reaction is a 2-(all-trans-polyprenyl)phenol + NADPH + O2 + H(+) = a 3-(all-trans-polyprenyl)benzene-1,2-diol + NADP(+) + H2O. It functions in the pathway cofactor biosynthesis; ubiquinone biosynthesis. Its function is as follows. Catalyzes the hydroxylation of two positions of the aromatic ring during ubiquinone biosynthesis. In Rhodospirillum rubrum (strain ATCC 11170 / ATH 1.1.1 / DSM 467 / LMG 4362 / NCIMB 8255 / S1), this protein is Ubiquinone hydroxylase UbiL.